The chain runs to 872 residues: Alanine--tRNA ligase (872 aa).

4 residues coordinate Zn(2+): histidine 571, histidine 575, cysteine 674, and histidine 678.

It belongs to the class-II aminoacyl-tRNA synthetase family. The cofactor is Zn(2+).

The protein resides in the cytoplasm. It carries out the reaction tRNA(Ala) + L-alanine + ATP = L-alanyl-tRNA(Ala) + AMP + diphosphate. Its function is as follows. Catalyzes the attachment of alanine to tRNA(Ala) in a two-step reaction: alanine is first activated by ATP to form Ala-AMP and then transferred to the acceptor end of tRNA(Ala). Also edits incorrectly charged Ser-tRNA(Ala) and Gly-tRNA(Ala) via its editing domain. The protein is Alanine--tRNA ligase of Symbiobacterium thermophilum (strain DSM 24528 / JCM 14929 / IAM 14863 / T).